We begin with the raw amino-acid sequence, 123 residues long: Large ribosomal subunit protein eL8 (123 aa).

This sequence belongs to the eukaryotic ribosomal protein eL8 family. As to quaternary structure, part of the 50S ribosomal subunit. Probably part of the RNase P complex.

The protein resides in the cytoplasm. Its function is as follows. Multifunctional RNA-binding protein that recognizes the K-turn motif in ribosomal RNA, the RNA component of RNase P, box H/ACA, box C/D and box C'/D' sRNAs. This Methanopyrus kandleri (strain AV19 / DSM 6324 / JCM 9639 / NBRC 100938) protein is Large ribosomal subunit protein eL8.